Consider the following 253-residue polypeptide: Zwei Ig domain protein zig-4 (253 aa).

Positions 1–16 (MFAIALLSFLVVLINA) are cleaved as a signal peptide. 2 consecutive Ig-like C2-type domains span residues 43–146 (PAKI…AEVE) and 162–245 (PEIV…TFLY). Disulfide bonds link Cys67/Cys130 and Cys183/Cys229.

Expressed in PVT, ASK, BAG, M2 and ASI neurons. In L1 larvae, expressed in pharyngeal ectoderm and mesoderm.

Its subcellular location is the secreted. In terms of biological role, required for maintaining axon position of PVQ and PVP neurons postembryonically in the ventral nerve cord (VNC) by preventing axons drifting into the opposite side of the VNC that could occur during body growth and movement. The polypeptide is Zwei Ig domain protein zig-4 (Caenorhabditis elegans).